The chain runs to 230 residues: Probable fimbrial chaperone SfmC (230 aa).

An N-terminal signal peptide occupies residues 1-23; sequence MMTKIKLLMLIIFYLIISASAHA.

This sequence belongs to the periplasmic pilus chaperone family.

The protein localises to the periplasm. Part of the sfmACDHF fimbrial operon. Could contribute to adhesion to various surfaces in specific environmental niches. Increases adhesion to eukaryotic T24 bladder epithelial cells in the absence of fim genes. This chain is Probable fimbrial chaperone SfmC (sfmC), found in Escherichia coli (strain K12).